A 514-amino-acid chain; its full sequence is MQQLNPAEISQLIKQRIQDLDTSATAKNEGTIVKVSDGIVQIHGLEDAMYGEMIEFEGDVYGMALNLEQDSVGAVVLGDYLGLQEGQKAYCTGRILEVPVGPELLGRVVDALGNPIDGKGPINAKLTDKVEKIAPGVIARQSVDEPVMTGYKAVDTMIPIGRGQRELIIGDRQTGKTAMAIDAIIAQKNSGIKCVYVAIGQKRSTIANVVRKLEETGALAYTTVVVASASEPAALQYIAPYSGCTMGEYFRDRGEDALIVYDDLSKQAVAYRQISLLLRRPPGREAYPGDVFYLHSRLLERASRVNAAYVEEFTNGEVKGQTGSLTALPIIETQAGDVSAFVPTNVISITDGQIFLESSLFNSGIRPAVNAGISVSRVGGAAQTKIIKKLSGGIRTALAQYRELAAFAQFASDLDDATKQQLDHGERVTELMKQKQYQPMSIAEQAAVIFASNEGYLSAIPVEKIGAWEEAYLRYMYDEQADLMQEINDTANYNDDIAGRLKSSVETFLQNHTF.

Residue 170–177 (GDRQTGKT) coordinates ATP.

It belongs to the ATPase alpha/beta chains family. F-type ATPases have 2 components, CF(1) - the catalytic core - and CF(0) - the membrane proton channel. CF(1) has five subunits: alpha(3), beta(3), gamma(1), delta(1), epsilon(1). CF(0) has three main subunits: a(1), b(2) and c(9-12). The alpha and beta chains form an alternating ring which encloses part of the gamma chain. CF(1) is attached to CF(0) by a central stalk formed by the gamma and epsilon chains, while a peripheral stalk is formed by the delta and b chains.

It is found in the cell inner membrane. The catalysed reaction is ATP + H2O + 4 H(+)(in) = ADP + phosphate + 5 H(+)(out). Produces ATP from ADP in the presence of a proton gradient across the membrane. The alpha chain is a regulatory subunit. In Psychrobacter sp. (strain PRwf-1), this protein is ATP synthase subunit alpha.